Here is a 637-residue protein sequence, read N- to C-terminus: tRNA 5-methylaminomethyl-2-thiouridine biosynthesis bifunctional protein MnmC (637 aa).

The segment at 1 to 231 (MPIDPARLAF…KRQMCRGRHR (231 aa)) is tRNA (mnm(5)s(2)U34)-methyltransferase. The segment at 250-637 (IGAGLAGSST…RPARGMTREG (388 aa)) is FAD-dependent cmnm(5)s(2)U34 oxidoreductase.

In the N-terminal section; belongs to the methyltransferase superfamily. tRNA (mnm(5)s(2)U34)-methyltransferase family. It in the C-terminal section; belongs to the DAO family. It depends on FAD as a cofactor.

The protein localises to the cytoplasm. It catalyses the reaction 5-aminomethyl-2-thiouridine(34) in tRNA + S-adenosyl-L-methionine = 5-methylaminomethyl-2-thiouridine(34) in tRNA + S-adenosyl-L-homocysteine + H(+). In terms of biological role, catalyzes the last two steps in the biosynthesis of 5-methylaminomethyl-2-thiouridine (mnm(5)s(2)U) at the wobble position (U34) in tRNA. Catalyzes the FAD-dependent demodification of cmnm(5)s(2)U34 to nm(5)s(2)U34, followed by the transfer of a methyl group from S-adenosyl-L-methionine to nm(5)s(2)U34, to form mnm(5)s(2)U34. In Aromatoleum aromaticum (strain DSM 19018 / LMG 30748 / EbN1) (Azoarcus sp. (strain EbN1)), this protein is tRNA 5-methylaminomethyl-2-thiouridine biosynthesis bifunctional protein MnmC.